Reading from the N-terminus, the 308-residue chain is Ectoine dioxygenase (308 aa).

Gln131 contributes to the L-ectoine binding site. Residue Lys137 participates in 2-oxoglutarate binding. Fe cation is bound by residues His148, Asp150, and His249.

Belongs to the PhyH family. EctD subfamily. Homodimer. It depends on Fe(2+) as a cofactor.

The enzyme catalyses L-ectoine + 2-oxoglutarate + O2 = 5-hydroxyectoine + succinate + CO2. Its function is as follows. Involved in the biosynthesis of 5-hydroxyectoine, called compatible solute, which helps organisms to survive extreme osmotic stress by acting as a highly soluble organic osmolyte. Catalyzes the 2-oxoglutarate-dependent selective hydroxylation of L-ectoine to yield (4S,5S)-5-hydroxyectoine. This is Ectoine dioxygenase from Bordetella parapertussis (strain 12822 / ATCC BAA-587 / NCTC 13253).